The following is a 571-amino-acid chain: Gag-Pro polyprotein (571 aa).

Glycine 2 is lipidated: N-myristoyl glycine; by host. Residues 100–103 (PPPY) carry the PPXY motif motif. 2 repeats span residues 342 to 362 (PPGP…CPTK) and 367 to 387 (PPGP…CPTL). 2 CCHC-type zinc fingers span residues 345 to 362 (PCYR…CPTK) and 370 to 387 (PCPI…CPTL). Threonine 453 serves as the catalytic Protease; shared with dimeric partner.

Homodimer; the homodimers are part of the immature particles. Interacts with human TSG101 and NEDD4; these interactions are essential for budding and release of viral particles. As to quaternary structure, homodimer; further assembles as homohexamers. In terms of processing, specific enzymatic cleavages by the viral protease yield mature proteins. The polyprotein is cleaved during and after budding, this process is termed maturation. The protease is autoproteolytically processed at its N- and C-termini. Myristoylated. Myristoylation of the matrix (MA) domain mediates the transport and binding of Gag polyproteins to the host plasma membrane and is required for the assembly of viral particles.

It localises to the virion. In terms of biological role, the matrix domain targets Gag, Gag-Pro and Gag-Pro-Pol polyproteins to the plasma membrane via a multipartite membrane binding signal, that includes its myristoylated N-terminus. Functionally, matrix protein. Its function is as follows. Forms the spherical core of the virus that encapsulates the genomic RNA-nucleocapsid complex. Binds strongly to viral nucleic acids and promote their aggregation. Also destabilizes the nucleic acids duplexes via highly structured zinc-binding motifs. In terms of biological role, the aspartyl protease mediates proteolytic cleavages of Gag and Gag-Pol polyproteins during or shortly after the release of the virion from the plasma membrane. Cleavages take place as an ordered, step-wise cascade to yield mature proteins. This process is called maturation. Displays maximal activity during the budding process just prior to particle release from the cell. This is Gag-Pro polyprotein from Bovine leukemia virus (isolate Japanese BLV-1) (BLV).